Reading from the N-terminus, the 77-residue chain is Putative antitoxin MazE7 (77 aa).

Residues 49-77 (REASHAETTTQAVRDEDREWEGTVGDGLG) form a disordered region.

In terms of assembly, forms a complex with cognate toxin MazF7.

In terms of biological role, antitoxin component of a type II toxin-antitoxin (TA) system. This chain is Putative antitoxin MazE7 (mazE7), found in Mycobacterium tuberculosis (strain CDC 1551 / Oshkosh).